The following is a 430-amino-acid chain: mRNA cap guanine-N(7) methyltransferase (430 aa).

The interval 1–88 (MALRPEKPVW…YDLEERKKKQ (88 aa)) is disordered. Basic and acidic residues predominate over residues 15–37 (QYDRQYGKLEEPKPPREESKPGD). One can recognise an mRNA cap 0 methyltransferase domain in the interval 136 to 419 (SPIIKLRNFN…FYTVFAFRKV (284 aa)). An mRNA-binding site is contributed by 145–146 (NN). S-adenosyl-L-methionine is bound by residues lysine 149, glycine 167, aspartate 189, aspartate 218, glutamine 244, and tyrosine 249.

It belongs to the class I-like SAM-binding methyltransferase superfamily. mRNA cap 0 methyltransferase family.

It localises to the nucleus. It catalyses the reaction a 5'-end (5'-triphosphoguanosine)-ribonucleoside in mRNA + S-adenosyl-L-methionine = a 5'-end (N(7)-methyl 5'-triphosphoguanosine)-ribonucleoside in mRNA + S-adenosyl-L-homocysteine. Responsible for methylating the 5'-cap structure of mRNAs. The protein is mRNA cap guanine-N(7) methyltransferase (ABD1) of Eremothecium gossypii (strain ATCC 10895 / CBS 109.51 / FGSC 9923 / NRRL Y-1056) (Yeast).